The sequence spans 378 residues: RNA polymerase sigma factor SigA (378 aa).

Residues 1–29 (MKNKTEVKNGGEKKNSKKVSKEESAKEKN) form a disordered region. Residues 145 to 215 (LAEANLRLVV…TRAIADQART (71 aa)) form a sigma-70 factor domain-2 region. An Interaction with polymerase core subunit RpoC motif is present at residues 169–172 (DLIQ). Positions 224–300 (ETINKLIRVS…DDEAPAPADA (77 aa)) are sigma-70 factor domain-3. Positions 313–366 (ILNTLTPREEKVLRLRFGLDDGRARTLEEVGKEFNVTRERIRQIEAKALRKLRH) are sigma-70 factor domain-4. Positions 339 to 358 (LEEVGKEFNVTRERIRQIEA) form a DNA-binding region, H-T-H motif.

It belongs to the sigma-70 factor family. RpoD/SigA subfamily. Interacts transiently with the RNA polymerase catalytic core.

Its subcellular location is the cytoplasm. Its function is as follows. Sigma factors are initiation factors that promote the attachment of RNA polymerase to specific initiation sites and are then released. This sigma factor is the primary sigma factor during exponential growth. In Clostridium acetobutylicum (strain ATCC 824 / DSM 792 / JCM 1419 / IAM 19013 / LMG 5710 / NBRC 13948 / NRRL B-527 / VKM B-1787 / 2291 / W), this protein is RNA polymerase sigma factor SigA.